A 147-amino-acid polypeptide reads, in one-letter code: D-aminoacyl-tRNA deacylase (147 aa).

The Gly-cisPro motif, important for rejection of L-amino acids signature appears at 136–137 (GP).

This sequence belongs to the DTD family. In terms of assembly, homodimer.

Its subcellular location is the cytoplasm. The enzyme catalyses glycyl-tRNA(Ala) + H2O = tRNA(Ala) + glycine + H(+). It carries out the reaction a D-aminoacyl-tRNA + H2O = a tRNA + a D-alpha-amino acid + H(+). In terms of biological role, an aminoacyl-tRNA editing enzyme that deacylates mischarged D-aminoacyl-tRNAs. Also deacylates mischarged glycyl-tRNA(Ala), protecting cells against glycine mischarging by AlaRS. Acts via tRNA-based rather than protein-based catalysis; rejects L-amino acids rather than detecting D-amino acids in the active site. By recycling D-aminoacyl-tRNA to D-amino acids and free tRNA molecules, this enzyme counteracts the toxicity associated with the formation of D-aminoacyl-tRNA entities in vivo and helps enforce protein L-homochirality. The sequence is that of D-aminoacyl-tRNA deacylase from Streptococcus equi subsp. equi (strain 4047).